Consider the following 511-residue polypeptide: DELLA protein RGL1 (511 aa).

A compositionally biased stretch (basic and acidic residues) spans 1–11 (MKREHNHRESS). Residues 1-20 (MKREHNHRESSAGEGGSSSM) are disordered. The DELLA motif motif lies at 32 to 36 (DELLV). The short motif at 54–58 (LEQLE) is the LEXLE motif element. Residues 73-77 (VHYNP) carry the VHYNP motif motif. One can recognise a GRAS domain in the interval 143-506 (LDSQETGVRL…RPLIATSAWR (364 aa)). Positions 150–204 (VRLVHALLACAEAVQQNNLKLADALVKHVGLLASSQAGAMRKVATYFAEGLARRI) are leucine repeat I (LRI). A LxCxE motif motif is present at residues 157–161 (LACAE). A VHIID region spans residues 223 to 288 (QIHFYESCPY…NGPPDFRLTG (66 aa)). A VHIID motif is present at residues 254 to 258 (VHVID). The tract at residues 298–330 (EVGWKLGQLASTIGVNFEFKSIALNNLSDLKPE) is leucine repeat II (LRII). The segment at 341-427 (VAVNSVFELH…ELFLGRQILN (87 aa)) is PFYRE. Positions 349-353 (LHRLL) match the LXXLL motif motif. The SAW stretch occupies residues 430 to 506 (ACEGEDRVER…RPLIATSAWR (77 aa)).

The protein belongs to the GRAS family. DELLA subfamily. In terms of assembly, interacts directly with the GID2/SLY1 component of the SCF(GID2) complex. Interacts (via N-terminus) with GID1A, GID1B and GID1B (via N-terminus). Interacts with the BOI proteins BOI, BRG1, BRG2 and BRG3. Binds to and coactivates GAF1/IDD2 and ENY/IDD1. Post-translationally, phosphorylated. May be ubiquitinated, as suggested by its interaction with GID2. Ubiquitination is however unsure since in contrast to other DELLA proteins, it is not ubiquitinated and degraded upon GA application. Nevertheless, ubiquitination may be triggered by other processes. In terms of tissue distribution, predominantly expressed in germinating seeds and flowers and siliques. Highly expressed in inflorescences and weakly or not expressed in rosette leaves, etiolated seedlings, siliques, mature stems and roots. RGA and GAI transcripts were detected at slightly varying levels in all tissues examined. RGL2 signal was undetected, and RGL3 signal was very weak in all tissues examined (rosette leaves, seedlings, inflorescences, and siliques) except inflorescences. In the flower, it is expressed in developing ovules as well as in developing anthers throughout microspore development.

It is found in the nucleus. Functionally, probable transcriptional regulator that acts as a repressor of the gibberellin (GA) signaling pathway. No effect of the BOI proteins on its stability. Probably acts by participating in large multiprotein complexes that repress transcription of GA-inducible genes. Has overlapping but distinct roles in GA signaling compared to RGA and GAI. Regulates the floral development. May also participate in seed germination and in ovule and anther development. Its activity is probably regulated by other phytohormones such as auxin and ethylene. This chain is DELLA protein RGL1 (RGL1), found in Arabidopsis thaliana (Mouse-ear cress).